The sequence spans 391 residues: Succinate--CoA ligase [ADP-forming] subunit beta (391 aa).

Residues 9–245 (KQIFAEYGVP…LSEEDPDEVE (237 aa)) enclose the ATP-grasp domain. Residues K46, 53-55 (GRG), E99, A102, and E107 each bind ATP. Mg(2+) contacts are provided by N200 and D214. Substrate is bound by residues N265 and 322–324 (GIV).

It belongs to the succinate/malate CoA ligase beta subunit family. In terms of assembly, heterotetramer of two alpha and two beta subunits. Mg(2+) serves as cofactor.

The catalysed reaction is succinate + ATP + CoA = succinyl-CoA + ADP + phosphate. It carries out the reaction GTP + succinate + CoA = succinyl-CoA + GDP + phosphate. The protein operates within carbohydrate metabolism; tricarboxylic acid cycle; succinate from succinyl-CoA (ligase route): step 1/1. In terms of biological role, succinyl-CoA synthetase functions in the citric acid cycle (TCA), coupling the hydrolysis of succinyl-CoA to the synthesis of either ATP or GTP and thus represents the only step of substrate-level phosphorylation in the TCA. The beta subunit provides nucleotide specificity of the enzyme and binds the substrate succinate, while the binding sites for coenzyme A and phosphate are found in the alpha subunit. The sequence is that of Succinate--CoA ligase [ADP-forming] subunit beta from Sulfurovum sp. (strain NBC37-1).